The primary structure comprises 289 residues: S-methyl-5'-thioadenosine phosphorylase (289 aa).

Residues Ser-24, 66–67 (RH), and 99–100 (TA) each bind phosphate. Met-202 lines the substrate pocket. Position 203 (Thr-203) interacts with phosphate. 226-228 (DYD) contacts substrate.

This sequence belongs to the PNP/MTAP phosphorylase family. MTAP subfamily. As to quaternary structure, homotrimer.

Its subcellular location is the cytoplasm. It is found in the nucleus. It carries out the reaction S-methyl-5'-thioadenosine + phosphate = 5-(methylsulfanyl)-alpha-D-ribose 1-phosphate + adenine. It functions in the pathway amino-acid biosynthesis; L-methionine biosynthesis via salvage pathway; S-methyl-5-thio-alpha-D-ribose 1-phosphate from S-methyl-5'-thioadenosine (phosphorylase route): step 1/1. Functionally, catalyzes the reversible phosphorylation of S-methyl-5'-thioadenosine (MTA) to adenine and 5-methylthioribose-1-phosphate. Involved in the breakdown of MTA, a major by-product of polyamine biosynthesis. Responsible for the first step in the methionine salvage pathway after MTA has been generated from S-adenosylmethionine. Has broad substrate specificity with 6-aminopurine nucleosides as preferred substrates. This chain is S-methyl-5'-thioadenosine phosphorylase, found in Drosophila pseudoobscura pseudoobscura (Fruit fly).